Here is a 235-residue protein sequence, read N- to C-terminus: Post-translational flagellin modification protein B (235 aa).

The protein belongs to the CMP-NeuNAc synthase family.

In terms of biological role, required for biosynthesis of LAH modification in the post-translational modification of Campylobacter coli flagellin. This Campylobacter coli protein is Post-translational flagellin modification protein B (ptmB).